Reading from the N-terminus, the 341-residue chain is Serpentine receptor class beta-1 (341 aa).

Helical transmembrane passes span 22–42 (AQFWTFIFSTLAVPALFIFLL), 66–86 (FLFAVVLALTFGYHILVPLFI), 102–122 (GQLSLTLFITLQMIMPFGFSI), 141–161 (LGPLLIFVLIGIDLILLFTVF), 188–208 (CWILLYAELGNLLCNCIILLV), 240–260 (LIVSFTHILFIGWYLGVTIFI), and 279–299 (GVYISVPTYNLTIVFVGIKAL).

This sequence belongs to the nematode receptor-like protein srb family.

It localises to the membrane. This is Serpentine receptor class beta-1 (srb-1) from Caenorhabditis elegans.